The primary structure comprises 421 residues: UPF0415 protein C7orf25 homolog (421 aa).

It belongs to the UPF0415 family.

This chain is UPF0415 protein C7orf25 homolog, found in Rattus norvegicus (Rat).